The sequence spans 156 residues: ATP synthase subunit b (156 aa).

The helical transmembrane segment at 11 to 31 threads the bilayer; sequence LIAFALFVWFCMKFVWPPIIN.

The protein belongs to the ATPase B chain family. F-type ATPases have 2 components, F(1) - the catalytic core - and F(0) - the membrane proton channel. F(1) has five subunits: alpha(3), beta(3), gamma(1), delta(1), epsilon(1). F(0) has three main subunits: a(1), b(2) and c(10-14). The alpha and beta chains form an alternating ring which encloses part of the gamma chain. F(1) is attached to F(0) by a central stalk formed by the gamma and epsilon chains, while a peripheral stalk is formed by the delta and b chains.

The protein localises to the cell inner membrane. Its function is as follows. F(1)F(0) ATP synthase produces ATP from ADP in the presence of a proton or sodium gradient. F-type ATPases consist of two structural domains, F(1) containing the extramembraneous catalytic core and F(0) containing the membrane proton channel, linked together by a central stalk and a peripheral stalk. During catalysis, ATP synthesis in the catalytic domain of F(1) is coupled via a rotary mechanism of the central stalk subunits to proton translocation. Component of the F(0) channel, it forms part of the peripheral stalk, linking F(1) to F(0). The sequence is that of ATP synthase subunit b from Haemophilus influenzae (strain PittGG).